The following is a 253-amino-acid chain: Sulfate transporter CysZ (253 aa).

The next 4 helical transmembrane spans lie at 31–51 (FVIL…WWLF), 72–92 (LSYI…GYFF), 151–171 (IVLL…PVLW), and 222–242 (IPVL…AMWV).

The protein belongs to the CysZ family.

The protein resides in the cell inner membrane. High affinity, high specificity proton-dependent sulfate transporter, which mediates sulfate uptake. Provides the sulfur source for the cysteine synthesis pathway. This chain is Sulfate transporter CysZ, found in Escherichia fergusonii (strain ATCC 35469 / DSM 13698 / CCUG 18766 / IAM 14443 / JCM 21226 / LMG 7866 / NBRC 102419 / NCTC 12128 / CDC 0568-73).